Consider the following 402-residue polypeptide: Nicotinate phosphoribosyltransferase (402 aa).

His221 is subject to Phosphohistidine; by autocatalysis.

It belongs to the NAPRTase family. In terms of processing, transiently phosphorylated on a His residue during the reaction cycle. Phosphorylation strongly increases the affinity for substrates and increases the rate of nicotinate D-ribonucleotide production. Dephosphorylation regenerates the low-affinity form of the enzyme, leading to product release.

The enzyme catalyses nicotinate + 5-phospho-alpha-D-ribose 1-diphosphate + ATP + H2O = nicotinate beta-D-ribonucleotide + ADP + phosphate + diphosphate. The protein operates within cofactor biosynthesis; NAD(+) biosynthesis; nicotinate D-ribonucleotide from nicotinate: step 1/1. In terms of biological role, catalyzes the synthesis of beta-nicotinate D-ribonucleotide from nicotinate and 5-phospho-D-ribose 1-phosphate at the expense of ATP. This chain is Nicotinate phosphoribosyltransferase, found in Sodalis glossinidius (strain morsitans).